The chain runs to 481 residues: F-box/LRR-repeat protein At3g03360 (481 aa).

The tract at residues 1–28 is disordered; the sequence is MEKESQENSTRPDASSTVFSSSKSTCAS. Over residues 14 to 28 the composition is skewed to low complexity; that stretch reads ASSTVFSSSKSTCAS. The F-box domain maps to 36–84; the sequence is GDLISRLPDDILQLILSYLPTRLAIKTSVLSRRWRHVWSDTWSLSFHRD. LRR repeat units lie at residues 118–145, 196–221, 295–320, 350–375, and 413–439; these read SRPD…SLYL, HCNI…LLFF, EADF…TLGA, ISRY…TIHP, and RRNV…ELIV.

The polypeptide is F-box/LRR-repeat protein At3g03360 (Arabidopsis thaliana (Mouse-ear cress)).